The primary structure comprises 174 residues: Adenylate kinase (174 aa).

The NMP stretch occupies residues 12 to 41 (STGDMLRAAIKAGTPLGLEAKKIIDEGGLV). Residues threonine 13, arginine 18, 39 to 41 (GLV), 67 to 70 (GFPR), and glutamine 74 each bind AMP. Residues 104 to 141 (GRRVHLASGRTYHVTYNPPKVEGKDDVTGEDLIQRDDD) form an LID region. ATP contacts are provided by residues arginine 105 and 114–115 (TY). The AMP site is built by arginine 138 and arginine 149.

It belongs to the adenylate kinase family. In terms of assembly, monomer.

The protein localises to the cytoplasm. The enzyme catalyses AMP + ATP = 2 ADP. It functions in the pathway purine metabolism; AMP biosynthesis via salvage pathway; AMP from ADP: step 1/1. Functionally, catalyzes the reversible transfer of the terminal phosphate group between ATP and AMP. Plays an important role in cellular energy homeostasis and in adenine nucleotide metabolism. This chain is Adenylate kinase, found in Neisseria flavescens.